The following is a 360-amino-acid chain: Isocitrate dehydrogenase [NAD] regulatory subunit B, mitochondrial (360 aa).

A mitochondrion-targeting transit peptide spans 1 to 113; sequence MLGRLRTVVK…MELRKALDLY (113 aa). Substrate is bound by residues serine 101, asparagine 103, arginine 107, and arginine 140. Position 227 (aspartate 227) interacts with Mg(2+). Residues 284–290 and asparagine 297 contribute to the NADP(+) site; that span reads HHVAADI.

Belongs to the isocitrate and isopropylmalate dehydrogenases family. In terms of assembly, heterooligomer of catalytic and regulatory subunits. Requires Mg(2+) as cofactor. It depends on Mn(2+) as a cofactor.

It is found in the mitochondrion. It catalyses the reaction D-threo-isocitrate + NAD(+) = 2-oxoglutarate + CO2 + NADH. Functionally, performs an essential role in the oxidative function of the citric acid cycle. This is Isocitrate dehydrogenase [NAD] regulatory subunit B, mitochondrial (idhB) from Dictyostelium discoideum (Social amoeba).